We begin with the raw amino-acid sequence, 988 residues long: UPF0182 protein MAB_3498c (988 aa).

The next 7 helical transmembrane spans lie at 19–39 (LVAASLVIVVLLLIGPRLVDT), 63–83 (LALFLIVGTLVAAVVFAGFGL), 114–134 (LFLIGVPILIGVLAGVVAQSY), 176–196 (FIAASIALIVNGLVHYIFGGI), 211–231 (IQLITFAGILVLLKVAAYWLD), 260–280 (KLILLAIAVICAVAVFSALVL), and 288–308 (IGLALLLLSSLVVGAGWPLIV).

It belongs to the UPF0182 family.

The protein localises to the cell membrane. This is UPF0182 protein MAB_3498c from Mycobacteroides abscessus (strain ATCC 19977 / DSM 44196 / CCUG 20993 / CIP 104536 / JCM 13569 / NCTC 13031 / TMC 1543 / L948) (Mycobacterium abscessus).